A 53-amino-acid polypeptide reads, in one-letter code: uncharacterized protein (53 aa).

The helical transmembrane segment at 4–24 (FILLIVGFIYGAGGVLLYSVY) threads the bilayer.

The protein resides in the host membrane. This is an uncharacterized protein from Acidianus bottle-shaped virus (isolate Italy/Pozzuoli) (ABV).